Consider the following 147-residue polypeptide: MVHFTAEEKAAVTSLWSKMNVEEAGGEALGRLLVVYPWTQRFFDSFGNLSSPSAILGNPKVKAHGKKVLTSFGDAIKNMDNLKTTFAKLSELHCDKLHVDPENFKLLGNVMVIILATHFGKEFTPEVQAAWQKLVSAVAIALAHKYH.

One can recognise a Globin domain in the interval 3–147 (HFTAEEKAAV…VAIALAHKYH (145 aa)). Ser-14 and Ser-51 each carry phosphoserine. Heme b contacts are provided by His-64 and His-93.

It belongs to the globin family. In terms of assembly, heterotetramer of two alpha chains and two epsilon chains in early embryonic hemoglobin Gower-2; two zeta chains and two epsilon chains in early embryonic hemoglobin Gower-1. In terms of tissue distribution, red blood cells.

In terms of biological role, the epsilon chain is a beta-type chain of early mammalian embryonic hemoglobin. This is Hemoglobin subunit epsilon (HBE1) from Pongo pygmaeus (Bornean orangutan).